Consider the following 399-residue polypeptide: Carbamoyl phosphate synthase small chain (399 aa).

Positions 1 to 204 are CPSase; sequence MTKTTLSSDP…WNKGYTINNE (204 aa). S60, G256, and G258 together coordinate L-glutamine. A Glutamine amidotransferase type-1 domain is found at 208-396; the sequence is HIVAIDYGIK…HDLIVNYREQ (189 aa). C285 (nucleophile) is an active-site residue. L-glutamine-binding residues include L286, Q289, N327, G329, and F330. Active-site residues include H369 and E371.

It belongs to the CarA family. As to quaternary structure, composed of two chains; the small (or glutamine) chain promotes the hydrolysis of glutamine to ammonia, which is used by the large (or ammonia) chain to synthesize carbamoyl phosphate. Tetramer of heterodimers (alpha,beta)4.

The catalysed reaction is hydrogencarbonate + L-glutamine + 2 ATP + H2O = carbamoyl phosphate + L-glutamate + 2 ADP + phosphate + 2 H(+). The enzyme catalyses L-glutamine + H2O = L-glutamate + NH4(+). It participates in amino-acid biosynthesis; L-arginine biosynthesis; carbamoyl phosphate from bicarbonate: step 1/1. The protein operates within pyrimidine metabolism; UMP biosynthesis via de novo pathway; (S)-dihydroorotate from bicarbonate: step 1/3. Its function is as follows. Small subunit of the glutamine-dependent carbamoyl phosphate synthetase (CPSase). CPSase catalyzes the formation of carbamoyl phosphate from the ammonia moiety of glutamine, carbonate, and phosphate donated by ATP, constituting the first step of 2 biosynthetic pathways, one leading to arginine and/or urea and the other to pyrimidine nucleotides. The small subunit (glutamine amidotransferase) binds and cleaves glutamine to supply the large subunit with the substrate ammonia. This Bartonella bacilliformis (strain ATCC 35685 / KC583 / Herrer 020/F12,63) protein is Carbamoyl phosphate synthase small chain.